We begin with the raw amino-acid sequence, 57 residues long: UPF0391 membrane protein RPA3505 (57 aa).

Helical transmembrane passes span 4 to 24 (WVVT…GGIA) and 30 to 50 (IAKI…VISI).

It belongs to the UPF0391 family.

The protein localises to the cell membrane. This is UPF0391 membrane protein RPA3505 from Rhodopseudomonas palustris (strain ATCC BAA-98 / CGA009).